The chain runs to 248 residues: B-box zinc finger protein 24 (248 aa).

Residues Cys5, Cys8, Cys28, His33, Cys57, Cys60, Cys80, and His85 each coordinate Zn(2+). Residues 5–47 form a B box-type 1; atypical zinc finger; sequence CDVCEKAPATVICCADEAALCPQCDIEIHAANKLASKHQRLHL. The segment at 57–99 adopts a B box-type 2; atypical zinc-finger fold; it reads CDICQEKAAFIFCVEDRALLCRDCDESIHVANSRSANHQRFLA. Residues 115 to 148 are disordered; that stretch reads IEKNQPEPSNNQQKANQIPAKSTSQQQQQPSSAT. Over residues 120–130 the composition is skewed to polar residues; the sequence is PEPSNNQQKAN. The segment covering 131–148 has biased composition (low complexity); that stretch reads QIPAKSTSQQQQQPSSAT. A Nuclear localization signal motif is present at residues 226–229; sequence KKPR. The tract at residues 236–248 is interaction with COP1; it reads DDDEEHFIVPDLG.

In terms of assembly, interacts with COP1 WD40 domain. Interacts with HY5 and HYH. Interacts with RCD1 and TRP4. In terms of processing, COP1-mediated ubiquitination and subsequent proteasomal degradation of BBX24/STO occurs in the dark. High expression in leaves and lower in roots and flowers.

Its subcellular location is the nucleus. Functionally, acts as a negative regulator of seedling photomorphogenesis and light-regulated inhibition of hypocotyl elongation. BBX24/STO and BBX25/STH function as transcriptional corepressors of HY5 activity, leading to the down-regulation of BBX22 expression. BBX24/STO acts additively with BBX25/STH during de-etiolation and the hypocotyl shade avoidance response. Functions as a negative regulator of photomorphogenic UV-B responses by interacting with both COP1 and HY5. May act as a transcription factor in the salt-stress response. This is B-box zinc finger protein 24 from Arabidopsis thaliana (Mouse-ear cress).